We begin with the raw amino-acid sequence, 135 residues long: Large ribosomal subunit protein mL54 (135 aa).

Belongs to the mitochondrion-specific ribosomal protein mL54 family. As to quaternary structure, component of the mitochondrial ribosome large subunit (39S) which comprises a 16S rRNA and about 50 distinct proteins.

The protein localises to the mitochondrion. This is Large ribosomal subunit protein mL54 (mrpl54) from Danio rerio (Zebrafish).